The sequence spans 75 residues: Serine rich endogenous peptide 4 (75 aa).

An N-terminal signal peptide occupies residues 1–31 (MATKTSNLGHLLLSLFILLLFILSQVGVAQA). Residues 51–75 (PPPLRGIVKPPIASFHSASPKDKGP) form a disordered region. An SCOOP motif motif is present at residues 61–75 (PIASFHSASPKDKGP). Positions 67 to 69 (SAS) match the SxS motif essential for MIK2 binding motif.

This sequence belongs to the serine rich endogenous peptide (SCOOP) phytocytokine family. Interacts with MIK2 (via extracellular leucine-rich repeat domain); this interaction triggers the formation of complex between MIK2 and the BAK1/SERK3 and SERK4 coreceptors, and subsequent BAK1 activation by phosphorylation. Mostly expressed in leaves and seedlings shoots, and, to a lower extent, in roots, stems, siliques, seeds and flowers.

It is found in the cell membrane. The protein resides in the secreted. The protein localises to the extracellular space. It localises to the apoplast. Its function is as follows. Brassicaceae-specific phytocytokine (plant endogenous peptide released into the apoplast) perceived by MIK2 in a BAK1/SERK3 and SERK4 coreceptors-dependent manner, that modulates various physiological and antimicrobial processes including growth prevention and reactive oxygen species (ROS) response regulation. Inhibits root growth. Prevents general growth and development. Exhibits antibacterial effects against Pseudomonas syringae pv. tomato DC3000, Ralstonia solanacearum, Bacillus subtilis and Agrobacterium tumefaciens, thus being an antimicrobial peptide (AMP). The polypeptide is Serine rich endogenous peptide 4 (Arabidopsis thaliana (Mouse-ear cress)).